We begin with the raw amino-acid sequence, 301 residues long: MTVQRILIVSGTHGNEINPVWAVKQFNREENSLKHGIEYEYIIGNPVAYEKGCRYIDVDLNRSFKESENCDQQKNSFYETNRANFLLDEFGIDGSKPCQIVIDLHTTTANMGTSIVLYGRRFKDFCLAALLQNKFGLPIYLHEKDKAQTGFLVEAWPCGLVIEIGAVAQNFYDPKIIDRFSLIISSLREEIDKLKNNLIELPKELVVYVHQGSIDYPRDKKGVIDGLIHPERINQDWKMIKKGDPLFLDSQGIVHKYDGDQLIWPVFIGEVAYKEKNIAMSYTKKEVICSKKQWVQDFESL.

Positions 13 and 16 each coordinate Zn(2+). Substrate contacts are provided by residues Arg54 and 61–62 (NR). His105 provides a ligand contact to Zn(2+). Substrate contacts are provided by Glu163 and Tyr273.

The protein belongs to the AspA/AstE family. Aspartoacylase subfamily. Requires Zn(2+) as cofactor.

The enzyme catalyses an N-acyl-L-aspartate + H2O = a carboxylate + L-aspartate. The chain is Probable aspartoacylase from Prochlorococcus marinus (strain AS9601).